The primary structure comprises 225 residues: Recoverin family protein DDB_G0274781 (225 aa).

A compositionally biased stretch (low complexity) spans 1 to 13 (MGNKQGKSPNNSK). Positions 1–20 (MGNKQGKSPNNSKGGKKYKI) are disordered. Gly2 carries N-myristoyl glycine lipidation. 3 consecutive EF-hand domains span residues 78–113 (DNSP…LCKG), 114–149 (TAEE…AWIS), and 174–209 (MAQI…HPKI). 15 residues coordinate Ca(2+): Asp91, Asn93, Asp95, Thr97, Glu102, Asp127, Asp129, Asn131, Tyr133, Glu138, Asp187, Asn189, Asp191, Lys193, and Glu198.

This sequence belongs to the recoverin family.

The sequence is that of Recoverin family protein DDB_G0274781 from Dictyostelium discoideum (Social amoeba).